The primary structure comprises 1188 residues: Meiotically up-regulated gene 190 protein (1188 aa).

Over residues 1-11 the composition is skewed to polar residues; it reads MSTHSGDSTKQ. Disordered regions lie at residues 1 to 61 and 83 to 125; these read MSTH…DPIT and FTVP…EADN. Basic and acidic residues predominate over residues 41–61; the sequence is EKKEEQQREQTENEKLFDPIT. The segment covering 84–112 has biased composition (polar residues); that stretch reads TVPNQSIQGSSLPSEKPYLSSNQPTNVYK. A helical transmembrane segment spans residues 173–193; the sequence is LVISWFFTHSIIISAVLPLAI. In terms of domain architecture, SMP-LTD spans 228–453; sequence IPESAEWMNH…SPKSMTIDLS (226 aa). The disordered stretch occupies residues 298–318; sequence ASESFSEKQASEAEHKDEPEQ. The segment covering 302-318 has biased composition (basic and acidic residues); the sequence is FSEKQASEAEHKDEPEQ. 2 C2 domains span residues 451 to 576 and 636 to 781; these read DLSK…ERCD and KEEE…TKWY. D485, D491, D544, D546, S549, and D552 together coordinate Ca(2+). 2 disordered regions span residues 615-639 and 1002-1066; these read TIPR…KEEE and QRAS…GTMN. At S1005 the chain carries Phosphoserine. The segment covering 1022 to 1032 has biased composition (acidic residues); sequence DDSVDTEDEET.

Ca(2+) is required as a cofactor.

The protein localises to the cytoplasm. Its subcellular location is the endoplasmic reticulum membrane. It localises to the nucleus membrane. It is found in the cytoskeleton. The protein resides in the microtubule organizing center. The protein localises to the spindle pole body. In terms of biological role, has a role in meiosis. The polypeptide is Meiotically up-regulated gene 190 protein (mug190) (Schizosaccharomyces pombe (strain 972 / ATCC 24843) (Fission yeast)).